A 256-amino-acid chain; its full sequence is Small ribosomal subunit protein eS1 (256 aa).

Alanine 2 carries the post-translational modification N-acetylalanine; partial.

This sequence belongs to the eukaryotic ribosomal protein eS1 family. In terms of assembly, component of the small ribosomal subunit. Mature ribosomes consist of a small (40S) and a large (60S) subunit. The 40S subunit contains about 33 different proteins and 1 molecule of RNA (18S). The 60S subunit contains about 49 different proteins and 3 molecules of RNA (25S, 5.8S and 5S).

Its subcellular location is the cytoplasm. This is Small ribosomal subunit protein eS1 from Laccaria bicolor (strain S238N-H82 / ATCC MYA-4686) (Bicoloured deceiver).